A 311-amino-acid chain; its full sequence is Tyrosine recombinase XerD (311 aa).

Residues 2 to 95 (KTLALQLQGY…AVRGLHRFAA (94 aa)) form the Core-binding (CB) domain. The region spanning 116-304 (RLPKSLTIDE…TVHALREVWA (189 aa)) is the Tyr recombinase domain. Residues Arg-160, Lys-184, His-256, Arg-259, and His-282 contribute to the active site. The active-site O-(3'-phospho-DNA)-tyrosine intermediate is Tyr-291.

It belongs to the 'phage' integrase family. XerD subfamily. Forms a cyclic heterotetrameric complex composed of two molecules of XerC and two molecules of XerD.

It is found in the cytoplasm. In terms of biological role, site-specific tyrosine recombinase, which acts by catalyzing the cutting and rejoining of the recombining DNA molecules. The XerC-XerD complex is essential to convert dimers of the bacterial chromosome into monomers to permit their segregation at cell division. It also contributes to the segregational stability of plasmids. The protein is Tyrosine recombinase XerD of Mycobacterium tuberculosis (strain CDC 1551 / Oshkosh).